The following is a 152-amino-acid chain: Small ribosomal subunit protein uS11A (152 aa).

A disordered region spans residues 131–152 (EDVTPIPSDSTRRKGGRRGRRL). A compositionally biased stretch (basic residues) spans 143 to 152 (RKGGRRGRRL).

Belongs to the universal ribosomal protein uS11 family.

The polypeptide is Small ribosomal subunit protein uS11A (Anopheles gambiae (African malaria mosquito)).